An 858-amino-acid polypeptide reads, in one-letter code: Myosin-K heavy chain (858 aa).

The region spanning 7–820 (SGVDDLVLVS…TIFVMEDLLM (814 aa)) is the Myosin motor domain. ATP is bound at residue 100-107 (GESGAGKT). A disordered region spans residues 121–265 (SPNNSSGGGI…GGGYGGSSKT (145 aa)). 2 stretches are compositionally biased toward gly residues: residues 126 to 139 (SGGG…GNGG) and 157 to 182 (RGMG…SRGG). A compositionally biased stretch (pro residues) spans 183–228 (GPPPTRGRGGPPPPIPQNRGAPPPVSNGGAPPPVARGPVAPPPTRG). Over residues 233–245 (RGGGPANRGGRGG) the composition is skewed to gly residues. The segment at 712–722 (PHYIRCIKPND) is actin-binding. The tail stretch occupies residues 821–858 (QKIDPIGYKNRVQAYKENEKLAQMKQGKHSMKQKCLIQ).

It belongs to the TRAFAC class myosin-kinesin ATPase superfamily. Myosin family.

It is found in the cytoplasm. Functionally, myosins are actin-based motor molecules with ATPase activity. Involved in phagocytosis and motility, and in the maintenance and dynamics of cell cortex. The polypeptide is Myosin-K heavy chain (myoK) (Dictyostelium discoideum (Social amoeba)).